The primary structure comprises 60 residues: Acrosin (60 aa).

Asparagine 3 carries N-linked (GlcNAc...) asparagine glycosylation. Residues 24 to 60 (IIGGQDAAHGSWPWMVSLQIFTYHNNRRYHVCGGSLL) form the Peptidase S1 domain.

The protein belongs to the peptidase S1 family. In terms of assembly, heavy chain (catalytic) and a light chain linked by two disulfide bonds. Forms a heterodimer with SERPINA5.

The enzyme catalyses Preferential cleavage: Arg-|-Xaa, Lys-|-Xaa.. Inhibited by SERPINA5. Acrosin is the major protease of mammalian spermatozoa. It is a serine protease of trypsin-like cleavage specificity, it is synthesized in a zymogen form, proacrosin and stored in the acrosome. The polypeptide is Acrosin (ACR) (Capra hircus (Goat)).